The chain runs to 464 residues: ATP synthase subunit beta (464 aa).

153 to 160 lines the ATP pocket; that stretch reads GGAGVGKT.

It belongs to the ATPase alpha/beta chains family. In terms of assembly, F-type ATPases have 2 components, CF(1) - the catalytic core - and CF(0) - the membrane proton channel. CF(1) has five subunits: alpha(3), beta(3), gamma(1), delta(1), epsilon(1). CF(0) has three main subunits: a(1), b(2) and c(9-12). The alpha and beta chains form an alternating ring which encloses part of the gamma chain. CF(1) is attached to CF(0) by a central stalk formed by the gamma and epsilon chains, while a peripheral stalk is formed by the delta and b chains.

It localises to the cell membrane. It carries out the reaction ATP + H2O + 4 H(+)(in) = ADP + phosphate + 5 H(+)(out). Its function is as follows. Produces ATP from ADP in the presence of a proton gradient across the membrane. The catalytic sites are hosted primarily by the beta subunits. The sequence is that of ATP synthase subunit beta from Alkaliphilus metalliredigens (strain QYMF).